A 314-amino-acid chain; its full sequence is 3'-5' exoribonuclease YhaM (314 aa).

The region spanning 163-279 (HVVSMLDLAK…LHYIDNLDAK (117 aa)) is the HD domain.

Belongs to the YhaM family.

Shows a 3'-5' exoribonuclease activity. This chain is 3'-5' exoribonuclease YhaM, found in Bacillus anthracis (strain CDC 684 / NRRL 3495).